We begin with the raw amino-acid sequence, 424 residues long: Multifunctional CCA protein (424 aa).

ATP-binding residues include glycine 8 and arginine 11. CTP-binding residues include glycine 8 and arginine 11. 2 residues coordinate Mg(2+): aspartate 21 and aspartate 23. The ATP site is built by arginine 91, arginine 149, and arginine 152. Residues arginine 91, arginine 149, and arginine 152 each coordinate CTP. The HD domain occupies 238–339 (TGIHLMMVLD…VRLLERCDAF (102 aa)).

Belongs to the tRNA nucleotidyltransferase/poly(A) polymerase family. Bacterial CCA-adding enzyme type 1 subfamily. As to quaternary structure, monomer. Can also form homodimers and oligomers. It depends on Mg(2+) as a cofactor. Ni(2+) serves as cofactor.

It carries out the reaction a tRNA precursor + 2 CTP + ATP = a tRNA with a 3' CCA end + 3 diphosphate. The enzyme catalyses a tRNA with a 3' CCA end + 2 CTP + ATP = a tRNA with a 3' CCACCA end + 3 diphosphate. In terms of biological role, catalyzes the addition and repair of the essential 3'-terminal CCA sequence in tRNAs without using a nucleic acid template. Adds these three nucleotides in the order of C, C, and A to the tRNA nucleotide-73, using CTP and ATP as substrates and producing inorganic pyrophosphate. tRNA 3'-terminal CCA addition is required both for tRNA processing and repair. Also involved in tRNA surveillance by mediating tandem CCA addition to generate a CCACCA at the 3' terminus of unstable tRNAs. While stable tRNAs receive only 3'-terminal CCA, unstable tRNAs are marked with CCACCA and rapidly degraded. The chain is Multifunctional CCA protein from Polaromonas naphthalenivorans (strain CJ2).